The chain runs to 583 residues: Inactive carboxylesterase-like protein VdtD (583 aa).

The N-terminal stretch at 1-23 (MFMTQIVFGIAPTLLKTFSHLTA) is a signal peptide. 9 N-linked (GlcNAc...) asparagine glycosylation sites follow: Asn84, Asn109, Asn221, Asn265, Asn307, Asn350, Asn388, Asn448, and Asn468.

It belongs to the type-B carboxylesterase/lipase family.

It participates in secondary metabolite biosynthesis. Functionally, inactive carboxylesterase-like protein; part of the gene cluster that mediates the biosynthesis of viriditoxin, one of the 'classical' secondary metabolites produced by fungi and that has antibacterial activity. The first step is performed by the polyketide synthase VdtA which condenses one acetyl-CoA and 6 malonyl-CoA units to form the heptaketide monomer backbone of viriditoxin. The product of VdtA is then O-methylated on C7 by the O-methyltransferase VdtC. The O-methyl group is important for the stereoselective coupling of the monomers at the final step of viriditoxin biosynthesis. The short-chain dehydrogenase/reductase VdtF then acts as a stereospecific reductase converting the pyrone to dihydropyrone via the reduction of the C3-C4 double bond. The FAD-binding monooxygenase VdtE then converts the ketone group into a methyl-ester group to yield semi-viriditoxin. Finally, the laccase VdtB is involved in dimerization of 2 semi-viriditoxin molecules to yield the final viriditoxin. VdtB is responsible for the regioselective 6,6'-coupling of semi-viriditoxin, which yields (M)-viriditoxin and (P)-viriditoxin at a ratio of 1:2. The non-catalytic carboxylesterase-like protein VdtD affects the stereochemistical outcome of the coupling. The highly reducing polyketide synthase VdtX is not involved in viriditoxin synthesis, but might possibly play a role in the production of additional metabolites not identified yet. The protein is Inactive carboxylesterase-like protein VdtD of Byssochlamys spectabilis (Paecilomyces variotii).